Consider the following 428-residue polypeptide: Gamma-glutamyl phosphate reductase (428 aa).

The protein belongs to the gamma-glutamyl phosphate reductase family.

The protein localises to the cytoplasm. It carries out the reaction L-glutamate 5-semialdehyde + phosphate + NADP(+) = L-glutamyl 5-phosphate + NADPH + H(+). It functions in the pathway amino-acid biosynthesis; L-proline biosynthesis; L-glutamate 5-semialdehyde from L-glutamate: step 2/2. Catalyzes the NADPH-dependent reduction of L-glutamate 5-phosphate into L-glutamate 5-semialdehyde and phosphate. The product spontaneously undergoes cyclization to form 1-pyrroline-5-carboxylate. This Zymomonas mobilis subsp. mobilis (strain ATCC 31821 / ZM4 / CP4) protein is Gamma-glutamyl phosphate reductase.